A 576-amino-acid chain; its full sequence is (+)-alpha-terpineol synthase (576 aa).

(2E)-geranyl diphosphate-binding residues include Arg286, Asp323, Asp327, Arg466, and Asn469. Asp323 and Asp327 together coordinate Mg(2+). The DDXXD motif signature appears at 323–327; that stretch reads DDVYD. Positions 469, 473, and 477 each coordinate Mg(2+).

This sequence belongs to the terpene synthase family. Tpsb subfamily. Mg(2+) is required as a cofactor. The cofactor is Mn(2+).

It carries out the reaction (2E,6E)-farnesyl diphosphate = beta-bisabolene + diphosphate. The enzyme catalyses (2E)-geranyl diphosphate + H2O = (R)-alpha-terpineol + diphosphate. It catalyses the reaction (2E)-geranyl diphosphate = (4S)-limonene + diphosphate. Its pathway is secondary metabolite biosynthesis; terpenoid biosynthesis. Its function is as follows. Monoterpene synthase which catalyzes the conversion of (2E)-geranyl diphosphate (GPP) to (R)-alpha-terpineol and (4S)-limonene, as well as small quantities of linalool, myrcene, (-)-alpha-pinene, (+)-sabinene and geraniol. To a lower extent, catalyzes the conversion of (2E,6E)-farnesyl diphosphate (FPP) to beta-bisabolene. The protein is (+)-alpha-terpineol synthase of Santalum album (White sandalwood).